Reading from the N-terminus, the 137-residue chain is Endoribonuclease YbeY (137 aa).

Zn(2+) is bound by residues His-107, His-111, and Asp-117.

The protein belongs to the endoribonuclease YbeY family. It depends on Zn(2+) as a cofactor.

It is found in the cytoplasm. Its function is as follows. Single strand-specific metallo-endoribonuclease involved in late-stage 70S ribosome quality control and in maturation of the 3' terminus of the 16S rRNA. This is Endoribonuclease YbeY from Bacteroides thetaiotaomicron (strain ATCC 29148 / DSM 2079 / JCM 5827 / CCUG 10774 / NCTC 10582 / VPI-5482 / E50).